The primary structure comprises 765 residues: MEEKYGGDVLAGPGGGGGLGPVDVPSARLTKYIVLLCFTKFLKAVGLFESYDLLKAVHIVQFIFILKLGTAFFMVLFQKPFSSGKTITKHQWIKIFKHAVAGCIISLLWFFGLTLCGPLRTLLLFEHSDIVVISLLSVLFTSSGGGPAKTRGAAFFIIAVICLLLFDNDDLMAKMAEHPEGHHDSALTHMLYTAIAFLGVADHKGGVLLLVLALCCKVGFHTASRKLSVDVGGAKRLQALSHLVSVLLLCPWVIVLSVTTESKVESWFSLIMPFATVIFFVMILDFYVDSICSVKMEVSKCARYGSFPIFISALLFGNFWTHPITDQLRAMNKAAHQESTEHVLSGGVVVSAIFFILSANILSSPSKRGQKGTLIGYSPEGTPLYNFMGDAFQHSSQSIPRFIKESLKQILEESDSRQIFYFLCLNLLFTFVELFYGVLTNSLGLISDGFHMLFDCSALVMGLFAALMSRWKATRIFSYGYGRIEILSGFINGLFLIVIAFFVFMESVARLIDPPELDTHMLTPVSVGGLIVNLIGICAFSHAHSHAHGASQGSCHSSDHSHSHHMHGHSDHGHGHSHGSAGGGMNANMRGVFLHVLADTLGSIGVIVSTVLIEQFGWFIADPLCSLFIAILIFLSVVPLIKDACQVLLLRLPPEYEKELHIALEKIQKIEGLISYRDPHFWRHSASIVAGTIHIQVTSDVLEQRIVQQVTGILKDAGVNNLTIQVEKEAYFQHMSGLSTGFHDVLAMTKQMESMKYCKDGTYIM.

At methionine 1 the chain carries N-acetylmethionine. Over 1-32 the chain is Cytoplasmic; it reads MEEKYGGDVLAGPGGGGGLGPVDVPSARLTKY. The chain crosses the membrane as a helical span at residues 33 to 53; it reads IVLLCFTKFLKAVGLFESYDL. Over 54–56 the chain is Lumenal; that stretch reads LKA. Residues 57-77 traverse the membrane as a helical segment; the sequence is VHIVQFIFILKLGTAFFMVLF. At 78-98 the chain is on the cytoplasmic side; it reads QKPFSSGKTITKHQWIKIFKH. Residues 99–119 form a helical membrane-spanning segment; sequence AVAGCIISLLWFFGLTLCGPL. Arginine 120 is a topological domain (lumenal). The chain crosses the membrane as a helical span at residues 121-141; sequence TLLLFEHSDIVVISLLSVLFT. Residues 142–152 are Cytoplasmic-facing; sequence SSGGGPAKTRG. Residues 153 to 173 form a helical membrane-spanning segment; the sequence is AAFFIIAVICLLLFDNDDLMA. Residues 174 to 193 lie on the Lumenal side of the membrane; it reads KMAEHPEGHHDSALTHMLYT. Residues 194 to 214 traverse the membrane as a helical segment; sequence AIAFLGVADHKGGVLLLVLAL. The Cytoplasmic segment spans residues 215-238; sequence CCKVGFHTASRKLSVDVGGAKRLQ. Residues 239-259 form a helical membrane-spanning segment; sequence ALSHLVSVLLLCPWVIVLSVT. Topologically, residues 260 to 267 are lumenal; that stretch reads TESKVESW. A helical membrane pass occupies residues 268–288; the sequence is FSLIMPFATVIFFVMILDFYV. The Cytoplasmic portion of the chain corresponds to 289-303; sequence DSICSVKMEVSKCAR. A helical transmembrane segment spans residues 304 to 324; that stretch reads YGSFPIFISALLFGNFWTHPI. Residues 325 to 342 lie on the Lumenal side of the membrane; that stretch reads TDQLRAMNKAAHQESTEH. The helical transmembrane segment at 343-363 threads the bilayer; the sequence is VLSGGVVVSAIFFILSANILS. The Cytoplasmic portion of the chain corresponds to 364 to 418; that stretch reads SPSKRGQKGTLIGYSPEGTPLYNFMGDAFQHSSQSIPRFIKESLKQILEESDSRQ. A helical transmembrane segment spans residues 419–439; it reads IFYFLCLNLLFTFVELFYGVL. Residues 420–640 form a mediates homodimerization with SLC30A6 region; it reads FYFLCLNLLF…ILIFLSVVPL (221 aa). Residues 440-448 lie on the Lumenal side of the membrane; that stretch reads TNSLGLISD. The helical transmembrane segment at 449-469 threads the bilayer; it reads GFHMLFDCSALVMGLFAALMS. Zn(2+) is bound by residues histidine 451 and aspartate 455. The Cytoplasmic portion of the chain corresponds to 470–483; it reads RWKATRIFSYGYGR. Residues 484–504 form a helical membrane-spanning segment; that stretch reads IEILSGFINGLFLIVIAFFVF. Residues 505–520 lie on the Lumenal side of the membrane; the sequence is MESVARLIDPPELDTH. A helical transmembrane segment spans residues 521 to 541; sequence MLTPVSVGGLIVNLIGICAFS. The segment at 542-578 is his-rich loop; required for zinc transport; the sequence is HAHSHAHGASQGSCHSSDHSHSHHMHGHSDHGHGHSH. Over 542-592 the chain is Cytoplasmic; the sequence is HAHSHAHGASQGSCHSSDHSHSHHMHGHSDHGHGHSHGSAGGGMNANMRGV. The disordered stretch occupies residues 551-581; it reads SQGSCHSSDHSHSHHMHGHSDHGHGHSHGSA. A helical transmembrane segment spans residues 593-613; that stretch reads FLHVLADTLGSIGVIVSTVLI. Zn(2+) is bound by residues histidine 595 and aspartate 599. Residues 614–617 are Lumenal-facing; that stretch reads EQFG. A helical transmembrane segment spans residues 618-638; sequence WFIADPLCSLFIAILIFLSVV. Over 639–765 the chain is Cytoplasmic; that stretch reads PLIKDACQVL…KYCKDGTYIM (127 aa).

The protein belongs to the cation diffusion facilitator (CDF) transporter (TC 2.A.4) family. SLC30A subfamily. As to quaternary structure, heterodimer with SLC30A6/ZNT6; form a functional zinc ion transmembrane transporter. Could homodimerize through the formation of dityrosine bonds upon oxidative stress. Ubiquitously expressed. Highly expressed in pancreas, liver and kidney. Expressed abundantly in insulin-containing beta cells, undetectable in other endocrine cell types including glucagon-secreting alpha cells and most acinar cells (at protein level).

It localises to the golgi apparatus. The protein resides in the golgi stack membrane. It is found in the cytoplasmic vesicle. Its subcellular location is the COPII-coated vesicle membrane. The protein localises to the secretory vesicle membrane. It localises to the trans-Golgi network membrane. The protein resides in the endoplasmic reticulum membrane. It is found in the cell membrane. Its subcellular location is the apical cell membrane. The enzyme catalyses Zn(2+)(in) + 2 H(+)(out) = Zn(2+)(out) + 2 H(+)(in). Its function is as follows. Together with SLC30A6 forms a functional proton-coupled zinc ion antiporter mediating zinc entry into the lumen of organelles along the secretory pathway. By contributing to zinc ion homeostasis within the early secretory pathway, regulates the activation and folding of enzymes like alkaline phosphatases and enzymes involved in phosphatidylinositol glycan anchor biosynthesis. Through the transport of zinc into secretory granules of pancreatic beta-cells, plays an important role in the storage and secretion of insulin. In terms of biological role, zinc ion:proton antiporter mediating influx and efflux of zinc at the plasma membrane. This chain is Proton-coupled zinc antiporter SLC30A5, found in Homo sapiens (Human).